The following is a 169-amino-acid chain: Disulfide bond formation protein B 1 (169 aa).

Topologically, residues 1–14 (MSEETIRLGRERRY) are cytoplasmic. A helical membrane pass occupies residues 15-31 (LVLLGIICLALIGGALY). The Periplasmic portion of the chain corresponds to 32 to 49 (MQIVLGEAPCPLCILQRY). Cys41 and Cys44 are oxidised to a cystine. The helical transmembrane segment at 50–64 (ALLLIALFAFIGAAM) threads the bilayer. Topologically, residues 65 to 71 (RTRRSIT) are cytoplasmic. The helical transmembrane segment at 72–89 (VFEVLVVICAIAGAGVAG) threads the bilayer. Residues 90 to 144 (HHVYTQFYPAVSCGIDVLQPIVDDLPLAKIFPLGFQVDGFCSTPYPPILGLSLAQ) are Periplasmic-facing. A disulfide bridge links Cys102 with Cys130. The chain crosses the membrane as a helical span at residues 145-163 (WALVAFVLVVILVPLLTSR). Topologically, residues 164-169 (NRKALR) are cytoplasmic.

The protein belongs to the DsbB family.

It is found in the cell inner membrane. Required for disulfide bond formation in some periplasmic proteins. Acts by oxidizing the DsbA protein. In Pseudomonas fluorescens (strain Pf0-1), this protein is Disulfide bond formation protein B 1.